We begin with the raw amino-acid sequence, 453 residues long: MIKKKFYIENYGCQMNISDSEIVSSILNNKGFIKTENLKEANIILINTCSIRDKSEKKILLRINQIKFIIKKNNDILIGILGCMAYKFKNIKEKKLINLVVGPDSYREIPNLINNFFKKKGEYISTSFSKTETYADIIPKREEKKITAFVTIMRGCDNMCTFCVVPFTRGREKSRDPYSIIKECKFLFKKGYKEIILLGQNVDSYLWYGGGLKKKFKIKEIKNEEIINFSKLLELVAISVPLMRIRFCTSNPNDMSDNVLNVIKKYINICKHIHLPVQSGSNRILSLMNRKHTCEDYILLINKIKNIIPNCSLSCDIITGFCNENENDHNETLNLMNYVKYNFSYMFIYSHRIGTYAYKKLIDNVSLSTKKRRLTEIINLQKTHSYYRNRKYIGSIQDILIEGISTKNINFFYGRNSGNDIVIFPKKNYKIGDFIKVKINNCTSATLVGDIYV.

In terms of domain architecture, MTTase N-terminal spans 4 to 118; it reads KKFYIENYGC…IPNLINNFFK (115 aa). Cys13, Cys49, Cys83, Cys156, Cys160, and Cys163 together coordinate [4Fe-4S] cluster. Positions 142–388 constitute a Radical SAM core domain; the sequence is EEKKITAFVT…NLQKTHSYYR (247 aa). The region spanning 390 to 453 is the TRAM domain; sequence RKYIGSIQDI…SATLVGDIYV (64 aa).

It belongs to the methylthiotransferase family. MiaB subfamily. Monomer. The cofactor is [4Fe-4S] cluster.

It is found in the cytoplasm. The catalysed reaction is N(6)-dimethylallyladenosine(37) in tRNA + (sulfur carrier)-SH + AH2 + 2 S-adenosyl-L-methionine = 2-methylsulfanyl-N(6)-dimethylallyladenosine(37) in tRNA + (sulfur carrier)-H + 5'-deoxyadenosine + L-methionine + A + S-adenosyl-L-homocysteine + 2 H(+). In terms of biological role, catalyzes the methylthiolation of N6-(dimethylallyl)adenosine (i(6)A), leading to the formation of 2-methylthio-N6-(dimethylallyl)adenosine (ms(2)i(6)A) at position 37 in tRNAs that read codons beginning with uridine. The sequence is that of tRNA-2-methylthio-N(6)-dimethylallyladenosine synthase from Karelsulcia muelleri (strain GWSS) (Sulcia muelleri).